The chain runs to 48 residues: Glycine-rich RNA-binding protein 3 (48 aa).

The protein is Glycine-rich RNA-binding protein 3 of Populus euphratica (Euphrates poplar).